The primary structure comprises 212 residues: Pyridoxine/pyridoxamine 5'-phosphate oxidase (212 aa).

Residues 8 to 11 (RREY) and Lys66 each bind substrate. Residues 61-66 (RIVLLK), 76-77 (FT), Arg82, Lys83, and Gln105 contribute to the FMN site. Tyr123, Arg127, and Ser131 together coordinate substrate. FMN contacts are provided by residues 140–141 (QS) and Trp185. Residue 191–193 (RLH) coordinates substrate. Arg195 provides a ligand contact to FMN.

It belongs to the pyridoxamine 5'-phosphate oxidase family. In terms of assembly, homodimer. Requires FMN as cofactor.

It catalyses the reaction pyridoxamine 5'-phosphate + O2 + H2O = pyridoxal 5'-phosphate + H2O2 + NH4(+). The catalysed reaction is pyridoxine 5'-phosphate + O2 = pyridoxal 5'-phosphate + H2O2. Its pathway is cofactor metabolism; pyridoxal 5'-phosphate salvage; pyridoxal 5'-phosphate from pyridoxamine 5'-phosphate: step 1/1. The protein operates within cofactor metabolism; pyridoxal 5'-phosphate salvage; pyridoxal 5'-phosphate from pyridoxine 5'-phosphate: step 1/1. Functionally, catalyzes the oxidation of either pyridoxine 5'-phosphate (PNP) or pyridoxamine 5'-phosphate (PMP) into pyridoxal 5'-phosphate (PLP). In Shewanella denitrificans (strain OS217 / ATCC BAA-1090 / DSM 15013), this protein is Pyridoxine/pyridoxamine 5'-phosphate oxidase.